A 528-amino-acid chain; its full sequence is MWLELGAMLRTTCGPLGRAVRLPCAGALRLRPHWWGPCRDCLAQRVHQDQPGRGLTEDEIRRAREARLRKAPRPQLSDRSRERKVPASRISRLASFGGLAVGLGLGALAEVTKKSLPGGSLQHEGSSPFLTEANAERIVQTLCTVRGAALKIGQMLSIQDNSLISPQLQRVFERVRQSADFMPRWQMMKVLEEELGKDWQDKVASLEEVPFAAASIGQVHQGVLKDGTEVAVKIQYPGVAESIQSDVQNLLALLKMSVGLPEGLFAEQSLQTLQQELAWECDYRREAACAQTFKKLLADDPFFRVPAVVEELCTTRVLGMELAGGIPLDQCQGLSQDIRNQICFQLLRLCLRELFEFRFMQTDPNWANFLYDASSHKVTLLDFGASRAFGTEFTDHYIEVVKAAADGDRDRVLQKSQDLKFLTGFETKAFSDAHVEAVMILGEPFAASGSYDFGAGETARRIQGLIPVLLRHRLRPPPEETYALHRKLAGAFLACARLHAHIACRDLFQDTYHRYWASRQTLPLPAAS.

A helical membrane pass occupies residues 93–109; that stretch reads LASFGGLAVGLGLGALA. The short motif at 151–154 is the KxGQ motif element; the sequence is KIGQ. The region spanning 187-419 is the Protein kinase domain; it reads MMKVLEEELG…DRVLQKSQDL (233 aa). An AAAS motif motif is present at residues 212-215; it reads AAAS. ATP contacts are provided by residues serine 215, lysine 233, and 320–323; that span reads MELA. The active-site Proton acceptor is the aspartate 363. ATP is bound by residues asparagine 368 and aspartate 382.

This sequence belongs to the protein kinase superfamily. ADCK protein kinase family. Homodimer; homodimerizes via its transmembrane region. Interacts with COQ6 and COQ7. Interacts with the multi-subunit COQ enzyme complex, composed of at least COQ3, COQ4, COQ5, COQ6, COQ7 and COQ9. In terms of tissue distribution, in the kidney, expressed in glomeruli, predominantly in podocyte foot precesses, as well as in proximal tubules and collecting ducts (at protein level).

Its subcellular location is the mitochondrion membrane. It is found in the cytoplasm. It localises to the cytosol. The protein resides in the cell membrane. It functions in the pathway cofactor biosynthesis; ubiquinone biosynthesis. In terms of biological role, atypical kinase involved in the biosynthesis of coenzyme Q, also named ubiquinone, an essential lipid-soluble electron transporter for aerobic cellular respiration. Its substrate specificity is still unclear: may act as a protein kinase that mediates phosphorylation of COQ3. According to other reports, acts as a small molecule kinase, possibly a lipid kinase that phosphorylates a prenyl lipid in the ubiquinone biosynthesis pathway, as suggested by its ability to bind coenzyme Q lipid intermediates. However, the small molecule kinase activity was not confirmed by another publication. Required for podocyte migration. This is Atypical kinase COQ8B, mitochondrial from Rattus norvegicus (Rat).